We begin with the raw amino-acid sequence, 68 residues long: Conotoxin G1.9 (68 aa).

The signal sequence occupies residues 1 to 21; that stretch reads MGMRMMFTVFLLVVLATTVVS. Positions 22 to 44 are excised as a propeptide; sequence FTSRRGPKSRRGEPVPTTVINYG. 2 cysteine pairs are disulfide-bonded: Cys-46-Cys-52 and Cys-47-Cys-61.

It belongs to the conotoxin A superfamily. As to expression, expressed by the venom duct.

It is found in the secreted. Functionally, does not show activity on all the human nAChR subtypes studied. The chain is Conotoxin G1.9 from Conus geographus (Geography cone).